The sequence spans 233 residues: MSGINGALVEDIKPDYSGVPGPALDSVRMRLAQLTHSLRRIRDDLSRADLTQWYSLQSQINVTLSQLMSVTSTLQHFEDTLDSTIVYPLPKFPTTSHESLLTTLLRKKNIPEVEEWIKDAIEASGVDTNMMRDDEIEKILEKNNEDSKWALEVFAKEFEKRESNGDTADDLDVLGNALKPVKTSVRQRAQSPFQVEDVLKYMSRGEVDRGSSSQEGLSTNNEQSGDKDIIMAD.

A disordered region spans residues 204 to 233 (RGEVDRGSSSQEGLSTNNEQSGDKDIIMAD). Positions 210–223 (GSSSQEGLSTNNEQ) are enriched in polar residues. The segment covering 224-233 (SGDKDIIMAD) has biased composition (basic and acidic residues).

Belongs to the Mediator complex subunit 8 family. In terms of assembly, component of the Mediator complex.

Its subcellular location is the nucleus. In terms of biological role, component of the Mediator complex, a coactivator involved in the regulated transcription of nearly all RNA polymerase II-dependent genes. Mediator functions as a bridge to convey information from gene-specific regulatory proteins to the basal RNA polymerase II transcription machinery. Mediator is recruited to promoters by direct interactions with regulatory proteins and serves as a scaffold for the assembly of a functional preinitiation complex with RNA polymerase II and the general transcription factors. In Candida glabrata (strain ATCC 2001 / BCRC 20586 / JCM 3761 / NBRC 0622 / NRRL Y-65 / CBS 138) (Yeast), this protein is Mediator of RNA polymerase II transcription subunit 8 (MED8).